The chain runs to 74 residues: Large ribosomal subunit protein uL29 (74 aa).

Belongs to the universal ribosomal protein uL29 family.

This chain is Large ribosomal subunit protein uL29, found in Cyanothece sp. (strain PCC 7425 / ATCC 29141).